The sequence spans 140 residues: Transcription antitermination protein NusB (140 aa).

It belongs to the NusB family.

Its function is as follows. Involved in transcription antitermination. Required for transcription of ribosomal RNA (rRNA) genes. Binds specifically to the boxA antiterminator sequence of the ribosomal RNA (rrn) operons. The sequence is that of Transcription antitermination protein NusB from Streptococcus pneumoniae (strain 70585).